We begin with the raw amino-acid sequence, 375 residues long: Ferredoxin--NADP reductase, root-type isozyme, chloroplastic (375 aa).

The transit peptide at 1–60 (MAHSALSQVSVAVPLQTDSSFRRSTFKATSITFSDRSSWISMPPIDLKAAPSRNQHIVCM) directs the protein to the chloroplast. In terms of domain architecture, FAD-binding FR-type spans 91–219 (KEPYTATIVS…TGPSGKIMLL (129 aa)). FAD contacts are provided by residues 151–154 (RLYL), 172–174 (CVR), Tyr178, 193–195 (VCS), and Thr235. Arg174 is a binding site for NADP(+). Residues Thr235, 266 to 267 (VA), 296 to 297 (SR), Lys306, 334 to 335 (GL), and Glu373 each bind NADP(+).

This sequence belongs to the ferredoxin--NADP reductase type 1 family. The cofactor is FAD.

Its subcellular location is the plastid. It localises to the chloroplast. The catalysed reaction is 2 reduced [2Fe-2S]-[ferredoxin] + NADP(+) + H(+) = 2 oxidized [2Fe-2S]-[ferredoxin] + NADPH. It functions in the pathway energy metabolism; photosynthesis. Functionally, may play a key role in regulating the relative amounts of cyclic and non-cyclic electron flow to meet the demands of the plant for ATP and reducing power. Is involved in nitrate assimilation. The chain is Ferredoxin--NADP reductase, root-type isozyme, chloroplastic from Nicotiana tabacum (Common tobacco).